The primary structure comprises 181 residues: MASSMLSSAAVVTSPAQATMVAPFTGLKSSSAFPVTRKANNDITSIVSNGGRVSCMKVWPPVGKKKFETLSYLPDLTEVELGKEVDYLLRNKWIPCVEFELEHGFVYREHGSTPGYYDGRYWTMWKLPLFGCTDSAQVLKEVQECKTEYPNAFIRIIGFDNNRQVQCISFIAYKPPSFTGA.

A chloroplast-targeting transit peptide spans 1 to 54 (MASSMLSSAAVVTSPAQATMVAPFTGLKSSSAFPVTRKANNDITSIVSNGGRVS).

This sequence belongs to the RuBisCO small chain family. Heterohexadecamer of 8 large and 8 small subunits.

The protein localises to the plastid. The protein resides in the chloroplast. Functionally, ruBisCO catalyzes two reactions: the carboxylation of D-ribulose 1,5-bisphosphate, the primary event in carbon dioxide fixation, as well as the oxidative fragmentation of the pentose substrate. Both reactions occur simultaneously and in competition at the same active site. Although the small subunit is not catalytic it is essential for maximal activity. This Brassica napus (Rape) protein is Ribulose bisphosphate carboxylase small subunit, chloroplastic 1.